Here is a 137-residue protein sequence, read N- to C-terminus: Small ribosomal subunit protein uS12 (137 aa).

Disordered stretches follow at residues 1–22 (MPTI…SKSP) and 37–57 (KNPS…TPKK). Positions 9–19 (RKGRKSHKGKS) are enriched in basic residues. D102 is subject to 3-methylthioaspartic acid.

The protein belongs to the universal ribosomal protein uS12 family. Part of the 30S ribosomal subunit. Contacts proteins S8 and S17. May interact with IF1 in the 30S initiation complex.

With S4 and S5 plays an important role in translational accuracy. Functionally, interacts with and stabilizes bases of the 16S rRNA that are involved in tRNA selection in the A site and with the mRNA backbone. Located at the interface of the 30S and 50S subunits, it traverses the body of the 30S subunit contacting proteins on the other side and probably holding the rRNA structure together. The combined cluster of proteins S8, S12 and S17 appears to hold together the shoulder and platform of the 30S subunit. This chain is Small ribosomal subunit protein uS12, found in Limosilactobacillus fermentum (strain NBRC 3956 / LMG 18251) (Lactobacillus fermentum).